The primary structure comprises 61 residues: Large ribosomal subunit protein uL30 (61 aa).

It belongs to the universal ribosomal protein uL30 family. In terms of assembly, part of the 50S ribosomal subunit.

The polypeptide is Large ribosomal subunit protein uL30 (Francisella tularensis subsp. tularensis (strain FSC 198)).